Here is an 80-residue protein sequence, read N- to C-terminus: Late expression factor 10 (80 aa).

The protein belongs to the baculoviridae LEF-10 family.

In terms of biological role, involved in late/very late gene activation. This chain is Late expression factor 10 (LEF-10), found in Orgyia pseudotsugata multicapsid polyhedrosis virus (OpMNPV).